A 394-amino-acid chain; its full sequence is Elongation factor Tu (394 aa).

Residues 10–204 (KPHVNVGTIG…AMDDYIPAPE (195 aa)) enclose the tr-type G domain. The tract at residues 19–26 (GHVDHGKT) is G1. A GTP-binding site is contributed by 19-26 (GHVDHGKT). Thr26 contributes to the Mg(2+) binding site. A G2 region spans residues 60 to 64 (GITIN). The tract at residues 81 to 84 (DCPG) is G3. GTP contacts are provided by residues 81–85 (DCPGH) and 136–139 (NKCD). The tract at residues 136–139 (NKCD) is G4. The G5 stretch occupies residues 174-176 (SAL).

It belongs to the TRAFAC class translation factor GTPase superfamily. Classic translation factor GTPase family. EF-Tu/EF-1A subfamily. In terms of assembly, monomer.

The protein localises to the cytoplasm. The catalysed reaction is GTP + H2O = GDP + phosphate + H(+). Its function is as follows. GTP hydrolase that promotes the GTP-dependent binding of aminoacyl-tRNA to the A-site of ribosomes during protein biosynthesis. The polypeptide is Elongation factor Tu (Francisella tularensis subsp. tularensis (strain FSC 198)).